The following is a 181-amino-acid chain: Thioredoxin-like protein CITRX2, chloroplastic (181 aa).

The N-terminal 70 residues, 1 to 70 (MQAATLSFQP…PDVATGKYVR (70 aa)), are a transit peptide targeting the chloroplast. In terms of domain architecture, Thioredoxin spans 72 to 181 (DYLVKKVSAK…MMRDIINNDL (110 aa)). Active-site nucleophile residues include Cys-104 and Cys-107. Cys-104 and Cys-107 are disulfide-bonded.

Belongs to the thioredoxin family. Plant CITRX-type subfamily.

The protein localises to the plastid. The protein resides in the chloroplast. Its function is as follows. Probable thiol-disulfide oxidoreductase that may play a role in proper chloroplast development. The protein is Thioredoxin-like protein CITRX2, chloroplastic of Nicotiana benthamiana.